A 342-amino-acid chain; its full sequence is Autoinducer 2 import system permease protein LsrC (342 aa).

Over 1-13 (MLKFIQNNREITA) the chain is Periplasmic. Residues 14–34 (LLAVLLLFVLPGFLDRQYLSV) traverse the membrane as a helical segment. Over 35–38 (QTLT) the chain is Cytoplasmic. A helical transmembrane segment spans residues 39 to 59 (MVYSSAQILILLAMGATLVML). Residues 60 to 69 (TRNIDVSVGS) are Periplasmic-facing. A helical membrane pass occupies residues 70-90 (ITGMCAVLLGMLLNAGYSLPV). Topologically, residues 91–92 (AC) are cytoplasmic. The chain crosses the membrane as a helical span at residues 93 to 113 (VATLLLGLLAGFFNGVLVAWL). A topological domain (periplasmic) is located at residue lysine 114. Residues 115 to 135 (IPAIVATLGTLGLYRGIMLLW) form a helical membrane-spanning segment. Residues 136–154 (TGGKWIEGLPAELKQLSAP) are Cytoplasmic-facing. A helical transmembrane segment spans residues 155 to 175 (LLLGVSAIGWLTIILVAFMAW). Topologically, residues 176–212 (LLAKTAFGRSFYATGDNLQGARQLGVRTEAIRIVAFS) are periplasmic. Residues 213-233 (LNGCMAALAGIVFASQIGFIP) form a helical membrane-spanning segment. Residues 234–251 (NQTGTGLEMKAIAACVLG) lie on the Cytoplasmic side of the membrane. Residues 252–272 (GISLLGGSGAIIGAVLGAWFL) form a helical membrane-spanning segment. The Periplasmic segment spans residues 273 to 283 (TQIDSVLVLLR). Residues 284–304 (IPAWWNDFIAGLVLLAVLVFD) traverse the membrane as a helical segment. The Cytoplasmic segment spans residues 305–342 (GRLRCALELNLRRQKYARFMTPPPSVKPASSGKKREAA).

The protein belongs to the binding-protein-dependent transport system permease family. AraH/RbsC subfamily. The complex is composed of two ATP-binding proteins (LsrA), two transmembrane proteins (LsrC and LsrD) and a solute-binding protein (LsrB).

It is found in the cell inner membrane. Its function is as follows. Part of the ABC transporter complex LsrABCD involved in autoinducer 2 (AI-2) import. Probably responsible for the translocation of the substrate across the membrane. The sequence is that of Autoinducer 2 import system permease protein LsrC (lsrC) from Escherichia coli O157:H7.